Consider the following 591-residue polypeptide: Aspartate--tRNA(Asp/Asn) ligase (591 aa).

Glu-170 contributes to the L-aspartate binding site. Positions Gln-194–Lys-197 are aspartate. Arg-216 is a binding site for L-aspartate. Residues Arg-216–Glu-218 and Gln-225 contribute to the ATP site. His-448 serves as a coordination point for L-aspartate. Glu-482 contributes to the ATP binding site. Arg-489 is an L-aspartate binding site. Gly-534–Arg-537 is a binding site for ATP. Positions Gly-559 to His-591 are disordered. The segment covering Gln-574 to His-591 has biased composition (basic and acidic residues).

The protein belongs to the class-II aminoacyl-tRNA synthetase family. Type 1 subfamily. In terms of assembly, homodimer.

Its subcellular location is the cytoplasm. It catalyses the reaction tRNA(Asx) + L-aspartate + ATP = L-aspartyl-tRNA(Asx) + AMP + diphosphate. Functionally, aspartyl-tRNA synthetase with relaxed tRNA specificity since it is able to aspartylate not only its cognate tRNA(Asp) but also tRNA(Asn). Reaction proceeds in two steps: L-aspartate is first activated by ATP to form Asp-AMP and then transferred to the acceptor end of tRNA(Asp/Asn). In Mycobacterium avium (strain 104), this protein is Aspartate--tRNA(Asp/Asn) ligase.